The sequence spans 342 residues: MGEMKSMQMGVIGALFLSVASSVSIVICNKALMTNLGFPFATTLTSWHLMVTYCTLHVAYKLNFFENKPIDMRTVVLFGLLNGISIGLLNLSLGFNSIGFYQMTKLAIIPFTVLLETLFLNKKFSQKIKFSLFLLLVGVGIASITDLQLNFVGSVLSLLAIATTCVGQILTNTIQKRLNVTSTQLLYQSAPFQAAILFVSGPFVDKYLTSLNVFSFHYSPIVVGFITLSCLIAVSVNFSTFLVIGKTSPVTYQVLGHLKTCLVLAFGYTLLHDPFTPRNIAGILIAVLGMLLYSYFCSVASKSKQASSDSTFLGKDRDTTPLLGQENENHHEAKKLDKHSPV.

The next 10 helical transmembrane spans lie at 7–27 (MQMGVIGALFLSVASSVSIVI), 36–56 (LGFPFATTLTSWHLMVTYCTL), 75–95 (VVLFGLLNGISIGLLNLSLGF), 100–120 (FYQMTKLAIIPFTVLLETLFL), 132–152 (LFLLLVGVGIASITDLQLNFV), 154–174 (SVLSLLAIATTCVGQILTNTI), 184–204 (QLLYQSAPFQAAILFVSGPFV), 221–241 (IVVGFITLSCLIAVSVNFSTF), 250–270 (VTYQVLGHLKTCLVLAFGYTL), and 280–300 (IAGILIAVLGMLLYSYFCSVA). The disordered stretch occupies residues 305-342 (QASSDSTFLGKDRDTTPLLGQENENHHEAKKLDKHSPV). The segment covering 327–342 (NENHHEAKKLDKHSPV) has biased composition (basic and acidic residues).

It belongs to the TPT transporter family. TPT (TC 2.A.7.9) subfamily. As to expression, ubiquitous.

Its subcellular location is the golgi apparatus membrane. The protein resides in the endoplasmic reticulum membrane. Functionally, nucleotide-sugar transporter that transports UDP-xylose and UMP in a strict counter-exchange mode. The sequence is that of UDP-xylose transporter 1 from Arabidopsis thaliana (Mouse-ear cress).